Reading from the N-terminus, the 334-residue chain is Ketol-acid reductoisomerase (NADP(+)) (334 aa).

The region spanning 1-181 (MNRYYDKNAD…GGGRTGILET (181 aa)) is the KARI N-terminal Rossmann domain. NADP(+)-binding positions include 24-27 (YGSQ), arginine 47, serine 50, serine 52, and 82-85 (DEFQ). Residue histidine 107 is part of the active site. Residue glycine 133 coordinates NADP(+). The 142-residue stretch at 182–323 (SFKDETETDL…ESLRSMMPWI (142 aa)) folds into the KARI C-terminal knotted domain. Mg(2+) contacts are provided by aspartate 190, glutamate 194, glutamate 226, and glutamate 230. Substrate is bound at residue serine 251.

This sequence belongs to the ketol-acid reductoisomerase family. Mg(2+) is required as a cofactor.

It catalyses the reaction (2R)-2,3-dihydroxy-3-methylbutanoate + NADP(+) = (2S)-2-acetolactate + NADPH + H(+). The catalysed reaction is (2R,3R)-2,3-dihydroxy-3-methylpentanoate + NADP(+) = (S)-2-ethyl-2-hydroxy-3-oxobutanoate + NADPH + H(+). The protein operates within amino-acid biosynthesis; L-isoleucine biosynthesis; L-isoleucine from 2-oxobutanoate: step 2/4. Its pathway is amino-acid biosynthesis; L-valine biosynthesis; L-valine from pyruvate: step 2/4. In terms of biological role, involved in the biosynthesis of branched-chain amino acids (BCAA). Catalyzes an alkyl-migration followed by a ketol-acid reduction of (S)-2-acetolactate (S2AL) to yield (R)-2,3-dihydroxy-isovalerate. In the isomerase reaction, S2AL is rearranged via a Mg-dependent methyl migration to produce 3-hydroxy-3-methyl-2-ketobutyrate (HMKB). In the reductase reaction, this 2-ketoacid undergoes a metal-dependent reduction by NADPH to yield (R)-2,3-dihydroxy-isovalerate. The polypeptide is Ketol-acid reductoisomerase (NADP(+)) (Ruthia magnifica subsp. Calyptogena magnifica).